The following is a 454-amino-acid chain: Epoxide hydrolase 1 (454 aa).

The chain crosses the membrane as a helical span at residues 1–21; that stretch reads MWLEILLASVLGFVIYWFVSK. At 22–454 the chain is on the cytoplasmic side; sequence DKEETLLLGD…RKFMGLLEQQ (433 aa). D226 (nucleophile) is an active-site residue. R294 is modified (dimethylated arginine). Catalysis depends on Y373, which acts as the Proton donor. H430 (proton acceptor) is an active-site residue.

It belongs to the peptidase S33 family.

It is found in the microsome membrane. The protein resides in the endoplasmic reticulum membrane. It catalyses the reaction cis-stilbene oxide + H2O = (1R,2R)-hydrobenzoin. It carries out the reaction 1-(4-methoxyphenyl)-N-methyl-N-[(3-methyloxetan-3-yl)methyl]methanamine + H2O = 2-{[(4-methoxybenzyl)(methyl)amino]methyl}-2-methylpropane-1,3-diol. The catalysed reaction is 8,9-epoxy-(5Z,11Z,14Z)-eicosatrienoate + H2O = 8,9-dihydroxy-(5Z,11Z,14Z)-eicosatrienoate. The enzyme catalyses 11,12-epoxy-(5Z,8Z,14Z)-eicosatrienoate + H2O = 11,12-dihydroxy-(5Z,8Z,14Z)-eicosatrienoate. It catalyses the reaction 2-(5Z,8Z,11Z,14Z-eicosatetraenoyl)-glycerol + H2O = glycerol + (5Z,8Z,11Z,14Z)-eicosatetraenoate + H(+). With respect to regulation, inhibited by 10-hydroxystearamide and methoxy-arachidonyl fluorophosphate. Biotransformation enzyme that catalyzes the hydrolysis of arene and aliphatic epoxides to less reactive and more water soluble dihydrodiols by the trans addition of water. May play a role in the metabolism of endogenous lipids such as epoxide-containing fatty acids. Metabolizes the abundant endocannabinoid 2-arachidonoylglycerol (2-AG) to free arachidonic acid (AA) and glycerol. Binds 20(S)-hydroxycholesterol (20(S)-OHC). This is Epoxide hydrolase 1 (EPHX1) from Sus scrofa (Pig).